Reading from the N-terminus, the 344-residue chain is Phosphate acyltransferase (344 aa).

The protein belongs to the PlsX family. As to quaternary structure, homodimer. Probably interacts with PlsY.

It localises to the cytoplasm. The catalysed reaction is a fatty acyl-[ACP] + phosphate = an acyl phosphate + holo-[ACP]. It functions in the pathway lipid metabolism; phospholipid metabolism. Catalyzes the reversible formation of acyl-phosphate (acyl-PO(4)) from acyl-[acyl-carrier-protein] (acyl-ACP). This enzyme utilizes acyl-ACP as fatty acyl donor, but not acyl-CoA. This chain is Phosphate acyltransferase, found in Blochmanniella floridana.